Reading from the N-terminus, the 428-residue chain is Serine--tRNA ligase (428 aa).

Position 231 to 233 (231 to 233) interacts with L-serine; it reads TSE. ATP is bound by residues 262–264 and valine 278; that span reads RRE. Glutamate 285 lines the L-serine pocket. 349–352 contributes to the ATP binding site; sequence ELTS. L-serine is bound at residue threonine 384.

Belongs to the class-II aminoacyl-tRNA synthetase family. Type-1 seryl-tRNA synthetase subfamily. Homodimer. The tRNA molecule binds across the dimer.

Its subcellular location is the cytoplasm. It catalyses the reaction tRNA(Ser) + L-serine + ATP = L-seryl-tRNA(Ser) + AMP + diphosphate + H(+). The enzyme catalyses tRNA(Sec) + L-serine + ATP = L-seryl-tRNA(Sec) + AMP + diphosphate + H(+). It participates in aminoacyl-tRNA biosynthesis; selenocysteinyl-tRNA(Sec) biosynthesis; L-seryl-tRNA(Sec) from L-serine and tRNA(Sec): step 1/1. Catalyzes the attachment of serine to tRNA(Ser). Is also able to aminoacylate tRNA(Sec) with serine, to form the misacylated tRNA L-seryl-tRNA(Sec), which will be further converted into selenocysteinyl-tRNA(Sec). The chain is Serine--tRNA ligase from Bifidobacterium animalis subsp. lactis (strain AD011).